The following is a 146-amino-acid chain: Hemoglobin subunit beta (146 aa).

V1 is subject to N-acetylvaline. One can recognise a Globin domain in the interval 2–146 (HLTADEKAAV…VATALAHKYH (145 aa)). Residue T12 is modified to Phosphothreonine. S44 is modified (phosphoserine). K59 carries the post-translational modification N6-acetyllysine. Residue H63 coordinates heme b. N6-acetyllysine is present on K82. H92 serves as a coordination point for heme b. The residue at position 93 (C93) is an S-nitrosocysteine. K144 carries the N6-acetyllysine modification.

This sequence belongs to the globin family. Heterotetramer of two alpha chains and two beta chains. In terms of tissue distribution, red blood cells.

Functionally, involved in oxygen transport from the lung to the various peripheral tissues. The chain is Hemoglobin subunit beta (HBB) from Taphozous georgianus (Sharp-nosed tomb bat).